A 223-amino-acid chain; its full sequence is DNA-directed RNA polymerase III subunit RPC7 (223 aa).

A compositionally biased stretch (basic and acidic residues) spans 111–124; the sequence is MMPRKKCKKGDPKS. The segment at 111–223 is disordered; the sequence is MMPRKKCKKG…SDDNMDEATY (113 aa). T134 is subject to Phosphothreonine. Basic and acidic residues predominate over residues 144 to 156; the sequence is KTIEELEKRGEGE. S158 is modified (phosphoserine). 2 stretches are compositionally biased toward acidic residues: residues 173–198 and 206–223; these read KDDE…EEND and NGDD…EATY.

It belongs to the eukaryotic RPC7 RNA polymerase subunit family. Component of the RNA polymerase III complex consisting of 17 subunits: a ten-subunit horseshoe-shaped catalytic core composed of POLR3A/RPC1, POLR3B/RPC2, POLR1C/RPAC1, POLR1D/RPAC2, POLR3K/RPC10, POLR2E/RPABC1, POLR2F/RPABC2, POLR2H/RPABC3, POLR2K/RPABC4 and POLR2L/RPABC5; a mobile stalk composed of two subunits POLR3H/RPC8 and CRCP/RPC9, protruding from the core and functioning primarily in transcription initiation; and additional subunits homologous to general transcription factors of the RNA polymerase II machinery, POLR3C/RPC3-POLR3F/RPC6-POLR3G/RPC7 heterotrimer required for transcription initiation and POLR3D/RPC4-POLR3E/RPC5 heterodimer involved in both transcription initiation and termination. Directly interacts with POLR3C/RPC62. Also found in a trimeric complex with POLR3C/RPC3 and POLR3GL. As to expression, expressed at low levels in the liver.

It is found in the nucleus. The protein localises to the cytoplasm. DNA-dependent RNA polymerase catalyzes the transcription of DNA into RNA using the four ribonucleoside triphosphates as substrates. Specific peripheric component of RNA polymerase III (Pol III) which synthesizes small non-coding RNAs including 5S rRNA, snRNAs, tRNAs and miRNAs from at least 500 distinct genomic loci. Acts as a long tether that bridges POLR3C/RPC3-POLR3F/RPC6-POLR3G/RPC7 heterotrimer and the mobile stalk of Pol III, coordinating the dynamics of Pol III stalk and clamp modules during the transition from apo to elongation state. Pol III exists as two alternative complexes defined by the mutually exclusive incorporation of subunit POLR3G/RPC7alpha or POLR3GL/RPC7beta. POLR3G/RPC7alpha modulates Pol III transcriptome by specifically enhancing the transcription of snaR-A non-coding RNAs. At resting state, occupies the active site of apo Pol III and keeps Pol III in an autoinhibitory mode, preventing non-specific transcription. Pol III plays a key role in sensing and limiting infection by intracellular bacteria and DNA viruses. Acts as a nuclear and cytosolic DNA sensor involved in innate immune response. Can sense non-self dsDNA that serves as template for transcription into dsRNA. The non-self RNA polymerase III transcripts, such as Epstein-Barr virus-encoded RNAs (EBERs), induce type I interferon and NF-kappa-B through the RIG-I pathway. This is DNA-directed RNA polymerase III subunit RPC7 (Polr3g) from Mus musculus (Mouse).